We begin with the raw amino-acid sequence, 380 residues long: 8-amino-7-oxononanoate synthase (380 aa).

R26 is a binding site for substrate. G104 to Y105 contacts pyridoxal 5'-phosphate. H129 serves as a coordination point for substrate. Pyridoxal 5'-phosphate-binding positions include S175, D200 to H203, and T232 to K235. An N6-(pyridoxal phosphate)lysine modification is found at K235. T345 serves as a coordination point for substrate.

This sequence belongs to the class-II pyridoxal-phosphate-dependent aminotransferase family. BioF subfamily. In terms of assembly, homodimer. Pyridoxal 5'-phosphate is required as a cofactor.

The enzyme catalyses 6-carboxyhexanoyl-[ACP] + L-alanine + H(+) = (8S)-8-amino-7-oxononanoate + holo-[ACP] + CO2. The protein operates within cofactor biosynthesis; biotin biosynthesis. Its function is as follows. Catalyzes the decarboxylative condensation of pimeloyl-[acyl-carrier protein] and L-alanine to produce 8-amino-7-oxononanoate (AON), [acyl-carrier protein], and carbon dioxide. The polypeptide is 8-amino-7-oxononanoate synthase (Mycolicibacterium vanbaalenii (strain DSM 7251 / JCM 13017 / BCRC 16820 / KCTC 9966 / NRRL B-24157 / PYR-1) (Mycobacterium vanbaalenii)).